A 131-amino-acid polypeptide reads, in one-letter code: Small ribosomal subunit protein uS8 (131 aa).

It belongs to the universal ribosomal protein uS8 family. Part of the 30S ribosomal subunit. Contacts proteins S5 and S12.

One of the primary rRNA binding proteins, it binds directly to 16S rRNA central domain where it helps coordinate assembly of the platform of the 30S subunit. This chain is Small ribosomal subunit protein uS8, found in Burkholderia multivorans (strain ATCC 17616 / 249).